Reading from the N-terminus, the 391-residue chain is Histamine H4 receptor (391 aa).

Residues 1–19 (MSESNGTDVLPLTAQVPLA) are Extracellular-facing. N-linked (GlcNAc...) asparagine glycosylation occurs at N5. Residues 20–40 (FLMSLLAFAITIGNAVVILAF) form a helical membrane-spanning segment. Topologically, residues 41–52 (VADRNLRHRSNY) are cytoplasmic. A helical membrane pass occupies residues 53 to 73 (FFLNLAISDFFVGVISIPLYI). Residues 74 to 87 (PHTLFNWNFGSGIC) are Extracellular-facing. A disulfide bridge connects residues C87 and C166. The chain crosses the membrane as a helical span at residues 88–108 (MFWLITDYLLCTASVYSIVLI). Topologically, residues 109 to 131 (SYDRYQSVSNAVRYRAQHTGILK) are cytoplasmic. A helical transmembrane segment spans residues 132–152 (IVAQMVAVWILAFLVNGPMIL). The Extracellular segment spans residues 153–174 (ASDSWKNSTNTEECEPGFVTEW). N-linked (GlcNAc...) asparagine glycosylation occurs at N159. The helical transmembrane segment at 175-195 (YILAITAFLEFLLPVSLVVYF) threads the bilayer. At 196–306 (SVQIYWSLWK…LLRGRKLARS (111 aa)) the chain is on the cytoplasmic side. Residues 307 to 327 (LAVLLSAFAICWAPYCLFTIV) form a helical membrane-spanning segment. Topologically, residues 328 to 343 (LSTYRRGERPKSIWYS) are extracellular. Residues 344–364 (IAFWLQWFNSLINPFLYPLCH) form a helical membrane-spanning segment. Over 365 to 391 (RRFQKAFWKILCVTKQPAPSQTQSVSS) the chain is Cytoplasmic.

It belongs to the G-protein coupled receptor 1 family. Interacts with TSPAN4.

The protein localises to the cell membrane. Functionally, the H4 subclass of histamine receptors could mediate the histamine signals in peripheral tissues. Displays a significant level of constitutive activity (spontaneous activity in the absence of agonist). The polypeptide is Histamine H4 receptor (Hrh4) (Rattus norvegicus (Rat)).